The chain runs to 43 residues: Parvalbumin beta (43 aa).

EF-hand domains are found at residues 1–20 and 22–43; these read KVFE…LKLF and LSSA…ALVK. Ca(2+)-binding residues include aspartate 7, aspartate 9, serine 11, phenylalanine 12, glutamate 14, glutamate 16, and glutamate 37.

Detected in muscle and cutaneous mucus. In the skin, detected in cells in the basal region of the glandular epithelium of the dermal mucus glands (at protein level).

The protein resides in the cytoplasm. The protein localises to the secreted. In muscle, parvalbumin is thought to be involved in relaxation after contraction. It binds two calcium ions. The protein is Parvalbumin beta of Rana temporaria (European common frog).